Consider the following 184-residue polypeptide: MGLIDVLKSFKSPSGREIRILLLGLDNAGKTTILKQLSSEDVQHVTPTKGFNVKTVAAMGDIRLNVWDIGGQRSIRPYWSNYYENIDTLIFVIDSNDKKRFDEMNIELGELLDEEKLRKVPVLIFANKQDLVTAASSEEITRKLNLDLLRDRTWHIQACSALKNEGINDGITWVASNLKPASKK.

Gly2 carries the N-myristoyl glycine lipid modification. Residues Gly24–Thr31, Asp68–Gln72, and Asn127–Asp130 each bind GTP.

The protein belongs to the small GTPase superfamily. Arf family.

It localises to the golgi apparatus. Its function is as follows. GTP-binding protein that may be involved in protein trafficking; may modulate vesicle budding and uncoating within the Golgi apparatus. In Caenorhabditis elegans, this protein is ADP-ribosylation factor-like protein 3 (arl-3).